The following is an 895-amino-acid chain: Catenin alpha-3 (895 aa).

Position 56 is a phosphoserine (Ser-56). Residues 74–111 (EKIAQEATVLKDELTASLEEVRKESEALKVSAERFTDD) are a coiled coil. At Ser-160 the chain carries Phosphoserine. Residues 325 to 379 (RERIIAECNAIRQALQDLLSEYMNNAGKKERSNTLNIALDNMCKKTRDLRRQLRK) are a coiled coil. Phosphoserine is present on residues Ser-637 and Ser-647. Thr-649 is modified (phosphothreonine).

Belongs to the vinculin/alpha-catenin family. As to quaternary structure, interacts with CTNNB1. Interacts with PKP2. As to expression, predominantly expressed in heart and testis. Expressed at lower levels in brain, kidney, liver and skeletal muscle.

It is found in the cytoplasm. It localises to the cytoskeleton. The protein resides in the cell junction. The protein localises to the desmosome. In terms of biological role, may be involved in formation of stretch-resistant cell-cell adhesion complexes. This is Catenin alpha-3 from Homo sapiens (Human).